A 289-amino-acid chain; its full sequence is Protease HtpX homolog (289 aa).

2 helical membrane-spanning segments follow: residues alanine 11 to glycine 31 and alanine 36 to tryptophan 54. Histidine 138 is a Zn(2+) binding site. Residue glutamate 139 is part of the active site. Histidine 142 serves as a coordination point for Zn(2+). The next 2 helical transmembrane spans lie at valine 153–glycine 173 and leucine 182–isoleucine 202. Glutamate 207 is a binding site for Zn(2+).

This sequence belongs to the peptidase M48B family. Zn(2+) serves as cofactor.

The protein resides in the cell membrane. The polypeptide is Protease HtpX homolog (Pseudarthrobacter chlorophenolicus (strain ATCC 700700 / DSM 12829 / CIP 107037 / JCM 12360 / KCTC 9906 / NCIMB 13794 / A6) (Arthrobacter chlorophenolicus)).